The sequence spans 914 residues: Solute carrier family 12 member 9 (914 aa).

Residues 1–36 (MASENSPLLAYRLLGEEGAAFPPNGAGGSGVASARK) lie on the Cytoplasmic side of the membrane. A Phosphoserine modification is found at serine 6. The chain crosses the membrane as a helical span at residues 37–57 (LSTFLGVVVPTVLSMFSIVVF). The Extracellular portion of the chain corresponds to 58–72 (LRIGFVVGHAGLLQA). Residues 73-93 (LAMLLVAYVILALTVLSVCAI) traverse the membrane as a helical segment. Topologically, residues 94 to 119 (ATNGAVRGGGAYFMISRTLGPEVGGS) are cytoplasmic. Residues 120–140 (IGLMFYLANVCGCAVSLLGLV) form a helical membrane-spanning segment. Residues 141 to 167 (ESILDVFGADVTGSSGIKVLPQGYGWN) lie on the Extracellular side of the membrane. Residues 168 to 188 (LLYGSLLLGLVGGVCALGAGL) form a helical membrane-spanning segment. The Cytoplasmic portion of the chain corresponds to 189–193 (YARAS). The chain crosses the membrane as a helical span at residues 194–214 (FLTFLLVSGSLASVLVSFVAV). The Extracellular portion of the chain corresponds to 215 to 262 (GPRNITLAPRPGTNGSSVPPRHGHFTGFNGSTLKDNLGAGYAEDYTTG). Asparagine 218, asparagine 228, and asparagine 243 each carry an N-linked (GlcNAc...) asparagine glycan. A helical transmembrane segment spans residues 263 to 283 (AMMTFASVFAVLFNGCTGIMA). Over 284 to 297 (GANMSGELKDPSRA) the chain is Cytoplasmic. A helical transmembrane segment spans residues 298 to 318 (IPLGTIIAVAYTFFIYILLFF). Over 319–338 (LSSFTCDRALLQGDYGFFRD) the chain is Extracellular. The chain crosses the membrane as a helical span at residues 339–359 (ISLWPPLVLIGIYATALSASM). Residues 360-376 (SSLIGASRILHALAQDD) are Cytoplasmic-facing. Residues 377-399 (LFGVILAPAKVVSGGGNPWGAVL) form a helical membrane-spanning segment. Over 400–416 (YSWGLVQLVLLAGKLNT) the chain is Extracellular. A helical membrane pass occupies residues 417–437 (LAAVVTVFYLVAYAAVDLSCL). At 438-466 (SLEWASAPNFRPTFSLFSWHTCLLGVASC) the chain is on the cytoplasmic side. Residues 467–487 (LLMMFLISPGAAGGSLLLMGL) traverse the membrane as a helical segment. Residues 488–740 (LSALLTARGG…LLRPRGGPGY (253 aa)) are Extracellular-facing. Residues 645–678 (PAFSEPAEGTREGGSPALSTLFPPPRAPGSPRAL) form a disordered region. The helical transmembrane segment at 741–761 (VDVCGLFLLQMATILSMVPAW) threads the bilayer. The Cytoplasmic portion of the chain corresponds to 762–914 (HSARLRIFLC…GVTPVTCTDL (153 aa)). The interval 843–864 (QQGRGTGGGPGGPEGRDGEEGP) is disordered. The span at 846-855 (RGTGGGPGGP) shows a compositional bias: gly residues.

This sequence belongs to the SLC12A transporter family. Interacts with SLC12A1.

The protein localises to the cell membrane. It localises to the lysosome membrane. May be an inhibitor of SLC12A1. Seems to correspond to a subunit of a multimeric transport system and thus, additional subunits may be required for its function. May play a role in lysosomal ion flux and osmoregulation. The sequence is that of Solute carrier family 12 member 9 (Slc12a9) from Rattus norvegicus (Rat).